Consider the following 258-residue polypeptide: U6 snRNA phosphodiesterase 1 (258 aa).

The interval M1–T20 is disordered. The active-site Proton acceptor is H117. Residues H117 to S119, Y200, and P202 to S208 each bind AMP. UMP-binding positions include Y200 and S204 to S208. Residue H206 is the Proton donor of the active site.

It belongs to the 2H phosphoesterase superfamily. USB1 family.

It localises to the nucleus. It carries out the reaction a 3'-end uridylyl-uridine-RNA = a 3'-end 2',3'-cyclophospho-uridine-RNA + uridine. In terms of biological role, 3'-5' RNA exonuclease that trims the 3' end of oligo(U) tracts of the pre-U6 small nuclear RNA (snRNA) molecule, leading to the formation of a mature U6 snRNA 3' end-terminated with a 2',3'-cyclic phosphate. Participates in the U6 snRNA 3' end processing that prevents U6 snRNA degradation. This chain is U6 snRNA phosphodiesterase 1, found in Drosophila melanogaster (Fruit fly).